The chain runs to 103 residues: Gene 56 protein (103 aa).

The region spanning 9–103 is the Glutaredoxin domain; the sequence is WDGAHVRTLF…DYYTASETGL (95 aa).

The protein is Gene 56 protein (56) of Mycobacterium phage L5 (Mycobacteriophage L5).